The following is a 281-amino-acid chain: Pantothenate synthetase (281 aa).

Residue 31–38 (MGNLHAGH) participates in ATP binding. His-38 functions as the Proton donor in the catalytic mechanism. (R)-pantoate is bound at residue Gln-62. Gln-62 provides a ligand contact to beta-alanine. An ATP-binding site is contributed by 150 to 153 (GKKD). Gln-156 serves as a coordination point for (R)-pantoate. ATP is bound by residues Val-179 and 187–190 (MSSR).

The protein belongs to the pantothenate synthetase family. As to quaternary structure, homodimer.

It localises to the cytoplasm. The enzyme catalyses (R)-pantoate + beta-alanine + ATP = (R)-pantothenate + AMP + diphosphate + H(+). Its pathway is cofactor biosynthesis; (R)-pantothenate biosynthesis; (R)-pantothenate from (R)-pantoate and beta-alanine: step 1/1. Catalyzes the condensation of pantoate with beta-alanine in an ATP-dependent reaction via a pantoyl-adenylate intermediate. This chain is Pantothenate synthetase, found in Xylella fastidiosa (strain M23).